The sequence spans 83 residues: Small ribosomal subunit protein bS21 (83 aa).

The disordered stretch occupies residues 40-83 (TPMDERRRKARSASKRNKVKWRYSNKSEETASETAETPASAPEA). Over residues 47-62 (RKARSASKRNKVKWRY) the composition is skewed to basic residues. The span at 71 to 83 (SETAETPASAPEA) shows a compositional bias: low complexity.

It belongs to the bacterial ribosomal protein bS21 family.

This Akkermansia muciniphila (strain ATCC BAA-835 / DSM 22959 / JCM 33894 / BCRC 81048 / CCUG 64013 / CIP 107961 / Muc) protein is Small ribosomal subunit protein bS21.